A 244-amino-acid polypeptide reads, in one-letter code: Phosphonates import ATP-binding protein PhnC (244 aa).

Residues 6–244 form the ABC transporter domain; that stretch reads IECHNLETAY…LQAQFVVNSQ (239 aa). 41-48 provides a ligand contact to ATP; it reads GLNGAGKS.

It belongs to the ABC transporter superfamily. Phosphonates importer (TC 3.A.1.9.1) family. The complex is composed of two ATP-binding proteins (PhnC), two transmembrane proteins (PhnE) and a solute-binding protein (PhnD).

It localises to the cell inner membrane. The enzyme catalyses phosphonate(out) + ATP + H2O = phosphonate(in) + ADP + phosphate + H(+). In terms of biological role, part of the ABC transporter complex PhnCDE involved in phosphonates import. Responsible for energy coupling to the transport system. The polypeptide is Phosphonates import ATP-binding protein PhnC (Trichormus variabilis (strain ATCC 29413 / PCC 7937) (Anabaena variabilis)).